The following is a 408-amino-acid chain: Repulsive guidance molecule B homolog drag-1 (408 aa).

Positions 1 to 22 (MSIVYLVSITFIFSVFKPITSC) are cleaved as a signal peptide. Topologically, residues 23–387 (RVEECAAWFQ…SEIFKKCIPS (365 aa)) are extracellular. N-linked (GlcNAc...) asparagine glycans are attached at residues Asn60, Asn134, Asn183, and Asn376. A helical transmembrane segment spans residues 388 to 408 (KSIRFYPFLAIFFFALLSLLC).

This sequence belongs to the repulsive guidance molecule (RGM) family. As to quaternary structure, interacts with unc-40 (via FN6 domain), dbl-1 and sma-6. In terms of tissue distribution, expressed in pharyngeal, hypodermal and intestinal cells.

The protein localises to the cell membrane. Functionally, probably in association with the cell surface receptor unc-40, positively modulates the BMP-like Sma/Mab signaling pathway through interaction with both the ligand dbl-1 and its type I receptor sma-6. Regulates body size and this may be through modulation of the Sma/Mab signaling pathway. This chain is Repulsive guidance molecule B homolog drag-1, found in Caenorhabditis elegans.